The primary structure comprises 468 residues: 3-isopropylmalate dehydratase large subunit (468 aa).

[4Fe-4S] cluster contacts are provided by Cys349, Cys409, and Cys412.

It belongs to the aconitase/IPM isomerase family. LeuC type 1 subfamily. Heterodimer of LeuC and LeuD. Requires [4Fe-4S] cluster as cofactor.

It carries out the reaction (2R,3S)-3-isopropylmalate = (2S)-2-isopropylmalate. The protein operates within amino-acid biosynthesis; L-leucine biosynthesis; L-leucine from 3-methyl-2-oxobutanoate: step 2/4. In terms of biological role, catalyzes the isomerization between 2-isopropylmalate and 3-isopropylmalate, via the formation of 2-isopropylmaleate. This chain is 3-isopropylmalate dehydratase large subunit, found in Jannaschia sp. (strain CCS1).